Here is a 490-residue protein sequence, read N- to C-terminus: MIEETQTPSPPAPAPAPAEYPIDLLTVESLDIEAQGIAHRADGKVVFIEGALPFEQVTANVYRKKSSFEKATLTAIYRESSQRVTPACPHFGMHTGACGGCKMQHLHIGAQVAVKQRVLEDNLRFIGKVKADNLLRPIEGPAWHYRYRARLSVRYVRKKGTALVGFHERKSAYVADMTECHVVPQHVSDMLVPLRGLISSMDARETIPQIELACGDDLTAMVLRHMEPLSVADLARLRAFAAANAGLQWWVQSGGLDTVKLLDAQVAELSYGLPEFGITMPFKPTDFTQVNPHINQVLVSRALRLLGVQPTERVIDWFCGLGNFTLPLATRAREVLGIEGSEVLVARSRENYERNKASSHVRPALEATKFVARNLFEMTPAMLVKDGAAEKWLVDPPREGAFELFKSLAALHQQVVTGVPCDDGIHQQSLALGGWTPPSRIVYVSCNPATLARDAGVLVEGGGYRCTAAGVVNMFPHTAHVESMAVFERL.

The TRAM domain occupies 14 to 75; the sequence is APAPAEYPID…SSFEKATLTA (62 aa). Residues C88, C98, C101, and C180 each contribute to the [4Fe-4S] cluster site. S-adenosyl-L-methionine is bound by residues Q289, F318, N323, E339, N374, and D395. C446 (nucleophile) is an active-site residue.

The protein belongs to the class I-like SAM-binding methyltransferase superfamily. RNA M5U methyltransferase family. RlmD subfamily.

It carries out the reaction uridine(1939) in 23S rRNA + S-adenosyl-L-methionine = 5-methyluridine(1939) in 23S rRNA + S-adenosyl-L-homocysteine + H(+). In terms of biological role, catalyzes the formation of 5-methyl-uridine at position 1939 (m5U1939) in 23S rRNA. This Polaromonas naphthalenivorans (strain CJ2) protein is 23S rRNA (uracil(1939)-C(5))-methyltransferase RlmD.